The primary structure comprises 397 residues: MALTPTREDKFSFGLWTIGYTGADPFGGPTRSDLDVVEGVERISELGAYGLTFHDDDLFAFGSTDAERQTQIDRLKGALSDTGIVVPMVTTNLFSAPVFKDGGFTSNDRAVRRFAIRKVLRNIDLAAELGAQTFVMWGGREGAEYDSAKDVRGALERYREAVNLLGDYVTDKGYDIRFAIEPKPNEPRGDILLPTLGHALAFIETLERPELVGVNPEVGHEQMAGLNFTAGIMQALYQGKLFHIDLNGQRGIKYDQDLVFGHGDLQNAFSLVDLLENGGVGGGRSYDGPRHFDYKPSRTEDITGVWDSAAANMRMYLLLKERAQAFRADPEVQEALAAAKVQEIYTPTLNEGESYDDILADRSSYEDFDAPSYFDAKGFGFVRLNQLALEHLMGARS.

Active-site residues include H54 and D57. Residues E181, E217, H220, D245, D255, D257, and D293 each contribute to the Mg(2+) site.

It belongs to the xylose isomerase family. Homotetramer. Mg(2+) serves as cofactor.

The protein localises to the cytoplasm. The enzyme catalyses alpha-D-xylose = alpha-D-xylulofuranose. In Clavibacter michiganensis subsp. michiganensis (strain NCPPB 382), this protein is Xylose isomerase.